Here is a 258-residue protein sequence, read N- to C-terminus: TLC domain-containing protein 4 A (258 aa).

The next 7 membrane-spanning stretches (helical) occupy residues 8-28, 49-71, 92-112, 118-138, 144-164, 170-190, and 217-237; these read YLISVEPLGFILYYTSLYIWI, IEWTNKIVATISSIVSFSLSCYC, FILKFISFYFLFDALHLIIYY, WPIIIHHLVVGILSYVYIGLY, LTLLYFLLFEITNPFIHMKWF, LENHILYSINGFMMAFFFIFI, and IIFFCFPIITILNLFWTYLVI. The TLC domain occupies 46–245; the sequence is SSKIEWTNKI…VIKGILKHLS (200 aa).

This sequence belongs to the TLCD4 family.

The protein localises to the membrane. In Dictyostelium discoideum (Social amoeba), this protein is TLC domain-containing protein 4 A (tlcd4a).